Reading from the N-terminus, the 361-residue chain is Versatile peroxidase VPL2 (361 aa).

A signal peptide spans 1 to 22; the sequence is MSFKTLSALALALGAAVQFASA. Positions 23-30 are excised as a propeptide; that stretch reads AVPLVQKR. 4 disulfide bridges follow: Cys-33–Cys-45, Cys-44–Cys-308, Cys-64–Cys-144, and Cys-272–Cys-337. Positions 66 and 70 each coordinate Mn(2+). Residue His-77 is the Proton acceptor of the active site. Ca(2+) is bound by residues Asp-78, Gly-90, Asp-92, and Ser-94. An N-linked (GlcNAc...) asparagine glycan is attached at Asn-126. The active-site Tryptophan radical intermediate is Trp-194. His-199 provides a ligand contact to heme b. Ser-200 is a Ca(2+) binding site. 203 to 207 provides a ligand contact to heme b; the sequence is AADKV. Residue Asp-205 coordinates Mn(2+). Asp-217, Thr-219, Val-222, and Asp-224 together coordinate Ca(2+).

The protein belongs to the peroxidase family. Ligninase subfamily. Requires heme b as cofactor. Ca(2+) is required as a cofactor.

It is found in the secreted. It carries out the reaction 1-(4-hydroxy-3-methoxyphenyl)-2-(2-methoxyphenoxy)propane-1,3-diol + H2O2 = guaiacol + vanillin + glycolaldehyde + H2O. It catalyses the reaction 2 Mn(2+) + H2O2 + 2 H(+) = 2 Mn(3+) + 2 H2O. Its function is as follows. A versatile ligninolytic peroxidase that combines the substrate specificity characteristics of the two other ligninolytic peroxidases, manganese peroxidase and lignin peroxidase. The polypeptide is Versatile peroxidase VPL2 (vpl2) (Pleurotus eryngii (Boletus of the steppes)).